We begin with the raw amino-acid sequence, 305 residues long: 2-methoxy-6-polyprenyl-1,4-benzoquinol methylase, mitochondrial (305 aa).

The transit peptide at 1 to 34 (MSRLRAPVAKFLADGLKGIRSTALAGSRLSNCRY) directs the protein to the mitochondrion. S-adenosyl-L-methionine-binding positions include Thr-117, Asp-143, and 173–174 (NA).

This sequence belongs to the class I-like SAM-binding methyltransferase superfamily. MenG/UbiE family. As to quaternary structure, component of a multi-subunit COQ enzyme complex, composed of at least COQ3, COQ4, COQ5, COQ6, COQ7 and COQ9.

Its subcellular location is the mitochondrion inner membrane. It carries out the reaction 2-methoxy-6-(all-trans-decaprenyl)benzene-1,4-diol + S-adenosyl-L-methionine = 5-methoxy-2-methyl-3-(all-trans-decaprenyl)benzene-1,4-diol + S-adenosyl-L-homocysteine + H(+). It functions in the pathway cofactor biosynthesis; ubiquinone biosynthesis. In terms of biological role, methyltransferase required for the conversion of 2-decaprenyl-6-methoxy-1,4-benzoquinol (DDMQH2) to 2-decaprenyl-3-methyl-6-methoxy-1,4-benzoquinol (DMQH2). The chain is 2-methoxy-6-polyprenyl-1,4-benzoquinol methylase, mitochondrial from Schizosaccharomyces pombe (strain 972 / ATCC 24843) (Fission yeast).